The sequence spans 397 residues: Succinate--CoA ligase [ADP-forming] subunit beta (397 aa).

In terms of domain architecture, ATP-grasp spans 9-254 (KALLKGYGAP…ETEEDAKEIE (246 aa)). ATP is bound by residues Lys46, 53–55 (GRG), Glu109, Ala112, and Glu117. The Mg(2+) site is built by Asn209 and Asp223. Substrate is bound by residues Asn274 and 331–333 (GIM).

It belongs to the succinate/malate CoA ligase beta subunit family. As to quaternary structure, heterotetramer of two alpha and two beta subunits. Mg(2+) serves as cofactor.

The catalysed reaction is succinate + ATP + CoA = succinyl-CoA + ADP + phosphate. The enzyme catalyses GTP + succinate + CoA = succinyl-CoA + GDP + phosphate. Its pathway is carbohydrate metabolism; tricarboxylic acid cycle; succinate from succinyl-CoA (ligase route): step 1/1. In terms of biological role, succinyl-CoA synthetase functions in the citric acid cycle (TCA), coupling the hydrolysis of succinyl-CoA to the synthesis of either ATP or GTP and thus represents the only step of substrate-level phosphorylation in the TCA. The beta subunit provides nucleotide specificity of the enzyme and binds the substrate succinate, while the binding sites for coenzyme A and phosphate are found in the alpha subunit. This is Succinate--CoA ligase [ADP-forming] subunit beta from Rhizobium leguminosarum bv. trifolii (strain WSM2304).